A 512-amino-acid polypeptide reads, in one-letter code: MLAAAIELVVIATSCMVRDAHGHDYRAALAMSLLYFEGQRSGRLPPAQRVQWRADSALADGADHRVPDLASPPSSNVSVCARTDAMQCDMQVDLTGGYYDSGDNVKFGFPMAFTVAALSWSVVEYGDRLDAAGELGHALDAVRWGADYLTRAHASAGGGEALYVQVGDGDSDHSCWQRPENMDTPRTAYMVNASSPGSDIAAETAAALASAADANFSSTLLLHAKQLFEFAKNHRGLYHNSVPSAAKFYASSGDEDELLWAAAWLYIATGGEEEYSAYIAGATNVGGVRSMFSWDDKFVGAQALLVLQGKLPADGSHAEMKTNLEQFICNLVQHSGGNGGGGGGARLSPGGMLWWDSWNNMQYVTLASLVLAVHADHLTAARSASLQCGGGASRSPAQLTAFVRSQVDYILGSNPETMSYMVGYGSRYPAEVHHRAASLPSIKSSPAKVTCKGGFDYLNKGSPDPNVIAGAIVGGPDADDRYDDSRQNFRQAEPSTVTVAPIVGILARLLPS.

An N-terminal signal peptide occupies residues 1–22 (MLAAAIELVVIATSCMVRDAHG). The N-linked (GlcNAc...) asparagine glycan is linked to Asn76. Asp103 functions as the Nucleophile in the catalytic mechanism. N-linked (GlcNAc...) asparagine glycans are attached at residues Asn192 and Asn215. Active-site residues include His433, Asp484, and Glu493.

It belongs to the glycosyl hydrolase 9 (cellulase E) family.

It is found in the secreted. The enzyme catalyses Endohydrolysis of (1-&gt;4)-beta-D-glucosidic linkages in cellulose, lichenin and cereal beta-D-glucans.. This is Endoglucanase 14 from Oryza sativa subsp. japonica (Rice).